The following is a 521-amino-acid chain: Riboflavin transporter MCH5 (521 aa).

Disordered regions lie at residues 1–33 (MSSD…SIHY) and 65–96 (NKGT…NEEI). Over 1-103 (MSSDSLTPKD…EEIESFPEGG (103 aa)) the chain is Cytoplasmic. The helical transmembrane segment at 104–124 (FKAWVVTFGCFLGLIACFGLL) threads the bilayer. The N-linked (GlcNAc...) asparagine glycan is linked to asparagine 125. Over 125-143 (NSTGVIESHLQDNQLSSES) the chain is Extracellular. Residues 144–164 (VSTIGWLFSLFLFVCSASCII) traverse the membrane as a helical segment. The Cytoplasmic portion of the chain corresponds to 165–172 (SGTYFDRN). Residues 173-193 (GFRTIMIVGTVFHVAGLFATA) traverse the membrane as a helical segment. An N-linked (GlcNAc...) asparagine glycan is attached at asparagine 194. Residues 194 to 200 (NSTKYWH) are Extracellular-facing. A helical transmembrane segment spans residues 201-221 (FILSFAIVCGFGNGIVLSPLV). Over 222-233 (SVPAHYFFKRRG) the chain is Cytoplasmic. Residues 234–254 (TALAMATIGGSVGGVVFPIML) traverse the membrane as a helical segment. The Extracellular segment spans residues 255–269 (RSFFSMKSDTDPTYG). The helical transmembrane segment at 270-290 (FVWGIRTLGFLDLALLTLSII) threads the bilayer. Topologically, residues 291-325 (LVKERLPHVIENSKDGESRWRYILRVYILQCFDAK) are cytoplasmic. The chain crosses the membrane as a helical span at residues 326-346 (AFLDMKYLFCVLGTVFSELSI). The Extracellular portion of the chain corresponds to 347–367 (NSALTYYGSYATSHGISANDA). Residues 368 to 388 (YTLIMIINVCGIPGRWVPGYL) form a helical membrane-spanning segment. The Cytoplasmic portion of the chain corresponds to 389–396 (SDKFGRFN). A helical membrane pass occupies residues 397–417 (VAIATLLTLFIVMFVGWLPFG). Residues 418–422 (TNLTN) lie on the Extracellular side of the membrane. Asparagine 419 carries N-linked (GlcNAc...) asparagine glycosylation. The helical transmembrane segment at 423 to 443 (MYVISALYGFCSGSVFSLLPV) threads the bilayer. Residues 444–461 (CCGQISKTEEFGKRYSTM) are Cytoplasmic-facing. The chain crosses the membrane as a helical span at residues 462–482 (YFVVGFGTLVGIPITGAIISI). At 483 to 487 (KTTAD) the chain is on the extracellular side. The chain crosses the membrane as a helical span at residues 488–508 (YQHYIIFCGLATFVSAVCYII). At 509 to 521 (SRAYCVGFKWVRF) the chain is on the cytoplasmic side.

Belongs to the major facilitator superfamily. Monocarboxylate porter (TC 2.A.1.13) family.

The protein resides in the cell membrane. Functionally, riboflavin transporter involved in riboflavin (vitamin B2) uptake. Does not act in the transport of monocarboxylic acids across the plasma membrane. The sequence is that of Riboflavin transporter MCH5 (MCH5) from Saccharomyces cerevisiae (strain ATCC 204508 / S288c) (Baker's yeast).